Reading from the N-terminus, the 329-residue chain is Cytosolic sulfotransferase 6 (329 aa).

74 to 79 (KCGTTW) is a 3'-phosphoadenylyl sulfate binding site. The active-site Proton acceptor is the His-140. Residues Arg-162, Ser-170, and 295–297 (RKG) contribute to the 3'-phosphoadenylyl sulfate site.

This sequence belongs to the sulfotransferase 1 family.

The protein resides in the cytoplasm. In terms of biological role, sulfotransferase that utilizes 3'-phospho-5'-adenylyl sulfate (PAPS) as sulfonate donor. The polypeptide is Cytosolic sulfotransferase 6 (SOT6) (Arabidopsis thaliana (Mouse-ear cress)).